We begin with the raw amino-acid sequence, 275 residues long: uncharacterized protein (275 aa).

Disordered regions lie at residues 1 to 25 (MIGGERVLLGSQKREPSNEEDDQEQ) and 185 to 275 (QRGE…RHHM). Basic and acidic residues predominate over residues 228–239 (KPGDGEENAKDD).

This is an uncharacterized protein from Neurospora crassa (strain ATCC 24698 / 74-OR23-1A / CBS 708.71 / DSM 1257 / FGSC 987).